A 195-amino-acid chain; its full sequence is Transcriptional regulator GfcR (195 aa).

This sequence belongs to the purine/pyrimidine phosphoribosyltransferase family. GfcR subfamily.

This Picrophilus torridus (strain ATCC 700027 / DSM 9790 / JCM 10055 / NBRC 100828 / KAW 2/3) protein is Transcriptional regulator GfcR.